The sequence spans 208 residues: Putative proteasome subunit alpha type-4-B (208 aa).

It belongs to the peptidase T1A family. Component of the 20S core complex of the 26S proteasome. The 26S proteasome is composed of a core protease (CP), known as the 20S proteasome, capped at one or both ends by the 19S regulatory particle (RP/PA700). The 20S proteasome core is composed of 28 subunits that are arranged in four stacked rings, resulting in a barrel-shaped structure. The two end rings are each formed by seven alpha subunits, and the two central rings are each formed by seven beta subunits. The catalytic chamber with the active sites is on the inside of the barrel.

Its subcellular location is the cytoplasm. It is found in the nucleus. Its function is as follows. The proteasome is a multicatalytic proteinase complex which is characterized by its ability to cleave peptides with Arg, Phe, Tyr, Leu, and Glu adjacent to the leaving group at neutral or slightly basic pH. The proteasome has an ATP-dependent proteolytic activity. The polypeptide is Putative proteasome subunit alpha type-4-B (PAC2) (Arabidopsis thaliana (Mouse-ear cress)).